Here is a 166-residue protein sequence, read N- to C-terminus: Tegument protein UL55 homolog (166 aa).

This sequence belongs to the alphaherpesvirinae HHV-1 UL55 family.

The protein localises to the virion tegument. It is found in the host nucleus matrix. The polypeptide is Tegument protein UL55 homolog (MDV070) (Gallid herpesvirus 2 (strain Chicken/Md5/ATCC VR-987) (GaHV-2)).